The following is a 259-amino-acid chain: 14-3-3-like protein GF14 omega (259 aa).

Phosphoserine occurs at positions 67, 109, and 190. Thr-211 is subject to Phosphothreonine.

This sequence belongs to the 14-3-3 family. In terms of assembly, interacts with CINV1.

It localises to the nucleus. Its subcellular location is the cytoplasm. Is associated with a DNA binding complex that binds to the G box, a well-characterized cis-acting DNA regulatory element found in plant genes. This Arabidopsis thaliana (Mouse-ear cress) protein is 14-3-3-like protein GF14 omega (GRF2).